The primary structure comprises 180 residues: Translation initiation factor IF-3 (180 aa).

The protein belongs to the IF-3 family. Monomer.

The protein resides in the cytoplasm. Its function is as follows. IF-3 binds to the 30S ribosomal subunit and shifts the equilibrium between 70S ribosomes and their 50S and 30S subunits in favor of the free subunits, thus enhancing the availability of 30S subunits on which protein synthesis initiation begins. The protein is Translation initiation factor IF-3 of Xylella fastidiosa (strain 9a5c).